Reading from the N-terminus, the 455-residue chain is Bifunctional protein GlmU (455 aa).

Positions Met-1–Arg-226 are pyrophosphorylase. UDP-N-acetyl-alpha-D-glucosamine-binding positions include Leu-8–Gly-11, Lys-22, Gln-73, Gly-78–Thr-79, Tyr-99–Asp-101, Gly-136, Glu-151, Asn-166, and Asn-224. Asp-101 contacts Mg(2+). Mg(2+) is bound at residue Asn-224. The interval Arg-227–Gln-247 is linker. The N-acetyltransferase stretch occupies residues Gly-248–Ser-455. The UDP-N-acetyl-alpha-D-glucosamine site is built by Arg-330 and Lys-348. His-360 serves as the catalytic Proton acceptor. Residues Tyr-363 and Asn-374 each contribute to the UDP-N-acetyl-alpha-D-glucosamine site. Residues Ala-377, Asn-383–Tyr-384, Ser-402, Ala-420, and Arg-437 each bind acetyl-CoA.

The protein in the N-terminal section; belongs to the N-acetylglucosamine-1-phosphate uridyltransferase family. In the C-terminal section; belongs to the transferase hexapeptide repeat family. In terms of assembly, homotrimer. Requires Mg(2+) as cofactor.

Its subcellular location is the cytoplasm. It catalyses the reaction alpha-D-glucosamine 1-phosphate + acetyl-CoA = N-acetyl-alpha-D-glucosamine 1-phosphate + CoA + H(+). The catalysed reaction is N-acetyl-alpha-D-glucosamine 1-phosphate + UTP + H(+) = UDP-N-acetyl-alpha-D-glucosamine + diphosphate. It participates in nucleotide-sugar biosynthesis; UDP-N-acetyl-alpha-D-glucosamine biosynthesis; N-acetyl-alpha-D-glucosamine 1-phosphate from alpha-D-glucosamine 6-phosphate (route II): step 2/2. It functions in the pathway nucleotide-sugar biosynthesis; UDP-N-acetyl-alpha-D-glucosamine biosynthesis; UDP-N-acetyl-alpha-D-glucosamine from N-acetyl-alpha-D-glucosamine 1-phosphate: step 1/1. The protein operates within bacterial outer membrane biogenesis; LPS lipid A biosynthesis. Functionally, catalyzes the last two sequential reactions in the de novo biosynthetic pathway for UDP-N-acetylglucosamine (UDP-GlcNAc). The C-terminal domain catalyzes the transfer of acetyl group from acetyl coenzyme A to glucosamine-1-phosphate (GlcN-1-P) to produce N-acetylglucosamine-1-phosphate (GlcNAc-1-P), which is converted into UDP-GlcNAc by the transfer of uridine 5-monophosphate (from uridine 5-triphosphate), a reaction catalyzed by the N-terminal domain. This chain is Bifunctional protein GlmU, found in Pseudomonas entomophila (strain L48).